Here is a 387-residue protein sequence, read N- to C-terminus: Phosphoglycerate kinase (387 aa).

Residues 21-23 (DLN), Arg36, 59-62 (HLGR), Arg113, and Arg146 contribute to the substrate site. ATP-binding positions include Lys197, Glu314, and 340-343 (GGDT).

The protein belongs to the phosphoglycerate kinase family. Monomer.

It is found in the cytoplasm. The enzyme catalyses (2R)-3-phosphoglycerate + ATP = (2R)-3-phospho-glyceroyl phosphate + ADP. It functions in the pathway carbohydrate degradation; glycolysis; pyruvate from D-glyceraldehyde 3-phosphate: step 2/5. This is Phosphoglycerate kinase from Proteus mirabilis (strain HI4320).